Here is a 325-residue protein sequence, read N- to C-terminus: Beta-ketoacyl-[acyl-carrier-protein] synthase III (325 aa).

Active-site residues include Cys-119 and His-252. The tract at residues 253-257 (QANIR) is ACP-binding. The active site involves Asn-282.

It belongs to the thiolase-like superfamily. FabH family. Homodimer.

Its subcellular location is the cytoplasm. It catalyses the reaction malonyl-[ACP] + acetyl-CoA + H(+) = 3-oxobutanoyl-[ACP] + CO2 + CoA. The protein operates within lipid metabolism; fatty acid biosynthesis. Catalyzes the condensation reaction of fatty acid synthesis by the addition to an acyl acceptor of two carbons from malonyl-ACP. Catalyzes the first condensation reaction which initiates fatty acid synthesis and may therefore play a role in governing the total rate of fatty acid production. Possesses both acetoacetyl-ACP synthase and acetyl transacylase activities. Its substrate specificity determines the biosynthesis of branched-chain and/or straight-chain of fatty acids. The protein is Beta-ketoacyl-[acyl-carrier-protein] synthase III of Verminephrobacter eiseniae (strain EF01-2).